The sequence spans 426 residues: AP-1 complex subunit mu-1 (426 aa).

One can recognise an MHD domain in the interval 167-425 (KNEVFLDVIE…TQNGTEYSIR (259 aa)).

This sequence belongs to the adaptor complexes medium subunit family. Adaptor protein complex 1 (AP-1) is a heterotetramer composed of two large adaptins (gamma-type subunit apl4 and beta-type subunit apl2), a medium adaptin (mu-type subunit apm1) and a small adaptin (sigma-type subunit aps1). AP-1 interacts with clathrin. Interacts with sad1.

Its subcellular location is the cytoplasmic vesicle. The protein resides in the clathrin-coated vesicle membrane. It is found in the membrane. The protein localises to the clathrin-coated pit. In terms of biological role, component of the adaptor complexes which link clathrin to receptors in coated vesicles. Clathrin-associated protein complexes are believed to interact with the cytoplasmic tails of membrane proteins, leading to their selection and concentration. The protein is AP-1 complex subunit mu-1 (apm1) of Schizosaccharomyces pombe (strain 972 / ATCC 24843) (Fission yeast).